We begin with the raw amino-acid sequence, 259 residues long: Hydroxyacylglutathione hydrolase (259 aa).

The Zn(2+) site is built by His-56, His-58, Asp-60, His-61, His-112, Asp-133, and His-171.

It belongs to the metallo-beta-lactamase superfamily. Glyoxalase II family. As to quaternary structure, monomer. It depends on Zn(2+) as a cofactor.

The catalysed reaction is an S-(2-hydroxyacyl)glutathione + H2O = a 2-hydroxy carboxylate + glutathione + H(+). Its pathway is secondary metabolite metabolism; methylglyoxal degradation; (R)-lactate from methylglyoxal: step 2/2. Functionally, thiolesterase that catalyzes the hydrolysis of S-D-lactoyl-glutathione to form glutathione and D-lactic acid. The chain is Hydroxyacylglutathione hydrolase from Pseudomonas putida (strain W619).